The sequence spans 237 residues: Purine nucleoside phosphorylase DeoD-type (237 aa).

An a purine D-ribonucleoside-binding site is contributed by H4. Residues G20, R24, R43, and 87–90 (RVGT) contribute to the phosphate site. A purine D-ribonucleoside contacts are provided by residues 179 to 181 (EME) and 203 to 204 (SD). D204 functions as the Proton donor in the catalytic mechanism.

It belongs to the PNP/UDP phosphorylase family. As to quaternary structure, homohexamer; trimer of homodimers.

The enzyme catalyses a purine D-ribonucleoside + phosphate = a purine nucleobase + alpha-D-ribose 1-phosphate. It catalyses the reaction a purine 2'-deoxy-D-ribonucleoside + phosphate = a purine nucleobase + 2-deoxy-alpha-D-ribose 1-phosphate. Functionally, catalyzes the reversible phosphorolytic breakdown of the N-glycosidic bond in the beta-(deoxy)ribonucleoside molecules, with the formation of the corresponding free purine bases and pentose-1-phosphate. The protein is Purine nucleoside phosphorylase DeoD-type of Streptococcus pyogenes serotype M4 (strain MGAS10750).